A 271-amino-acid polypeptide reads, in one-letter code: Zinc finger CCHC domain-containing protein 9 (271 aa).

The segment at 1–40 (MTRWARVSTTYNKRPLPATSWEDMKKGSFEGTSQNLPKRK) is disordered. Position 48 is a phosphoserine (serine 48). 4 CCHC-type zinc fingers span residues 128–145 (MVCF…DCPA), 155–172 (GICY…KCKA), 184–201 (AKCF…SCPD), and 211–228 (GGCK…DCPE).

It is found in the nucleus. Its subcellular location is the nucleolus. In terms of biological role, may down-regulate transcription mediated by NF-kappa-B and the serum response element. The chain is Zinc finger CCHC domain-containing protein 9 (ZCCHC9) from Homo sapiens (Human).